The following is a 155-amino-acid chain: Protein U1 (155 aa).

It belongs to the nanovirus U1 protein family.

This Cicer arietinum (Chickpea) protein is Protein U1 (DNA-U1).